The sequence spans 137 residues: Phospholipase A2 group V (137 aa).

Positions 1 to 20 (MKGLLTLAWFLACSVPAVPG) are cleaved as a signal peptide. Intrachain disulfides connect cysteine 46-cysteine 137, cysteine 48-cysteine 64, cysteine 63-cysteine 117, cysteine 70-cysteine 110, cysteine 79-cysteine 103, and cysteine 97-cysteine 108. The Ca(2+) site is built by tyrosine 47, glycine 49, and glycine 51. Histidine 67 is an active-site residue. Aspartate 68 serves as a coordination point for Ca(2+). Aspartate 111 is an active-site residue.

This sequence belongs to the phospholipase A2 family. Ca(2+) serves as cofactor. In terms of processing, this enzyme lacks one of the seven disulfide bonds found in similar PA2 proteins. As to expression, expressed in peritoneal macrophages (at protein level). Expressed in heart, skeletal muscle and white adipose tissue.

The protein localises to the secreted. Its subcellular location is the cell membrane. It localises to the cytoplasmic vesicle. The protein resides in the phagosome. It is found in the recycling endosome. The protein localises to the golgi apparatus. Its subcellular location is the cis-Golgi network. It localises to the trans-Golgi network. It carries out the reaction a 1,2-diacyl-sn-glycero-3-phosphocholine + H2O = a 1-acyl-sn-glycero-3-phosphocholine + a fatty acid + H(+). The enzyme catalyses 1-hexadecanoyl-2-(9Z-octadecenoyl)-sn-glycero-3-phosphocholine + H2O = 1-hexadecanoyl-sn-glycero-3-phosphocholine + (9Z)-octadecenoate + H(+). It catalyses the reaction 1-hexadecanoyl-2-(5Z,8Z,11Z,14Z-eicosatetraenoyl)-sn-glycero-3-phosphocholine + H2O = 1-hexadecanoyl-sn-glycero-3-phosphocholine + (5Z,8Z,11Z,14Z)-eicosatetraenoate + H(+). The catalysed reaction is 1-hexadecanoyl-2-(9Z,12Z-octadecadienoyl)-sn-glycero-3-phosphoethanolamine + H2O = 1-hexadecanoyl-sn-glycero-3-phosphoethanolamine + (9Z,12Z)-octadecadienoate + H(+). It carries out the reaction 1-hexadecanoyl-2-(5Z,8Z,11Z,14Z-eicosatetraenoyl)-sn-glycero-3-phosphoethanolamine + H2O = 1-hexadecanoyl-sn-glycero-3-phosphoethanolamine + (5Z,8Z,11Z,14Z)-eicosatetraenoate + H(+). The enzyme catalyses 1-octadecanoyl-2-(5Z,8Z,11Z,14Z-eicosatetraenoyl)-sn-glycero-3-phospho-(1D-myo-inositol) + H2O = 1-octadecanoyl-sn-glycero-3-phospho-(1D-myo-inositol) + (5Z,8Z,11Z,14Z)-eicosatetraenoate + H(+). It catalyses the reaction 1-hexadecanoyl-2-(9Z-octadecenoyl)-sn-glycero-3-phosphoglycerol + H2O = 1-hexadecanoyl-sn-glycero-3-phosphoglycerol + (9Z)-octadecenoate + H(+). The catalysed reaction is N-hexadecanoyl-1,2-di-(9Z-octadecenoyl)-sn-glycero-3-phosphoethanolamine + H2O = N-hexadecanoyl-1-(9Z-octadecenoyl)-sn-glycero-3-phosphoethanolamine + (9Z)-octadecenoate + H(+). It carries out the reaction 1'-[1,2-di-(9Z-octadecenoyl)-sn-glycero-3-phospho]-3'-[1-(9Z-octadecenoyl)-sn-glycero-3-phospho]-glycerol + H2O = 1',3'-bis-[1-(9Z-octadecenoyl)-sn-glycero-3-phospho]-glycerol + (9Z)-octadecenoate + H(+). The enzyme catalyses 1',3'-bis[1,2-di-(9Z-octadecenoyl)-sn-glycero-3-phospho]-glycerol + H2O = 1'-[1,2-di-(9Z-octadecenoyl)-sn-glycero-3-phospho]-3'-[1-(9Z-octadecenoyl)-sn-glycero-3-phospho]-glycerol + (9Z)-octadecenoate + H(+). Its pathway is lipid metabolism; phospholipid metabolism. It functions in the pathway lipid metabolism; leukotriene B4 biosynthesis. The protein operates within lipid metabolism; leukotriene C4 biosynthesis. Functionally, secretory calcium-dependent phospholipase A2 that primarily targets extracellular phospholipids. Hydrolyzes the ester bond of the fatty acyl group attached at sn-2 position of phospholipids (phospholipase A2 activity), preferentially releasing fatty acyl groups with a low degree of unsaturation such as oleoyl (C18:1) and linoleoyl (C18:2) groups. Hydrolyzes low-density lipoprotein (LDL) phospholipids releasing unsaturated fatty acids that drive macrophage polarization toward an M2 phenotype. May act in an autocrine and paracrine manner. Contributes to lipid remodeling of cellular membranes at different subcellular locations and generation of lipid mediators involved in pathogen clearance. Cleaves sn-2 fatty acyl chains of cardiolipin, a major component of the inner membrane of mitochondria and bacterial membranes. Promotes phagocytosis of bacteria in macrophages through production of lysophosphatidylethanolamines. Displays bactericidal activity against Gram-positive bacteria by directly hydrolyzing the phospholipids of the bacterial membrane. Promotes phagocytosis and killing of ingested fungi likely through controlling phagosome-lysosome fusion and phagosome maturation. Plays a role in biosynthesis of cysteinyl leukotrienes (CysLTs) in myeloid cells. In eosinophils, triggers perinuclear arachidonate release and LTC4 synthesis in a PLA2G4A-independent way. In neutrophils, amplifies CysLTs biosynthesis initiated by PLA2G4A. Promotes immune complex clearance in macrophages via stimulating synthesis of CysLTs, which act through CYSLTR1 to trigger phagocytosis. May regulate antigen processing in antigen-presenting cells. In pulmonary macrophages regulates IL33 production required for activation of group 2 innate lymphoid cells. May play a role in the biosynthesis of N-acyl ethanolamines that regulate energy metabolism. Hydrolyzes N-acyl phosphatidylethanolamines to N-acyl lysophosphatidylethanolamines, which are further cleaved by a lysophospholipase D to release N-acyl ethanolamines. The protein is Phospholipase A2 group V (Pla2g5) of Mus musculus (Mouse).